Reading from the N-terminus, the 445-residue chain is MNEEYDVIVLGTGLTECILSGIMSVNGKKVLHMDRNPYYGGESASITPLEDLYKRFKIPGAPPASMGRGRDWNVDLIPKFLMANGQLVKMLLFTEVTRYLDFKVTEGSFVYKGGKIYKVPSTEAEALASSLMGLFEKRRFRKFLVYVANFDENDPRTFEGIDPKKTSMREVYKKFDLGQDVIDFTGHALALYRTDDYLDQPCCETINRIKLYSESLARYGKSPYLYPLYGLGELPQGFARLSAIYGGTYMLNKPIEEIIMQNGKVIGVKSEGEIARCKQLICDPSYVKDRVEKVGQVIRVICILSHPIKNTNDANSCQIIIPQNQVNRKSDIYVCMISSAHNVAAQGKYIAIASTTVETKEPEKEIRPALELLEPIEQKFVSISDLLVPKDLGTESQIFISRTYDATTHFETTCDDIKDIYKRMMGSEFDFEEMKRKKNDIYGEE.

Met1 is modified (N-acetylmethionine). The residue at position 57 (Lys57) is an N6-succinyllysine. Position 112 is an N6-acetyllysine (Lys112). The residue at position 130 (Ser130) is a Phosphoserine. Lys269 is subject to N6-acetyllysine. At Ser382 the chain carries Phosphoserine.

The protein belongs to the Rab GDI family. Interacts with RHOH. Interacts with the GDP-bound inactive forms of RAB3A, RAB3B, RAB3C, RAB5A, RAB5B, RAB5C, RAB8A, RAB8B, RAB10, RAB12, RAB35, and RAB43; binds RAB3D to a lesser extent. Interacts with DZIP1; this interaction negatively regulates the interaction of GDI2 with GDP-bound RAB8A. Ubiquitously expressed.

It is found in the cytoplasm. Its subcellular location is the membrane. The protein localises to the golgi apparatus. The protein resides in the trans-Golgi network. GDP-dissociation inhibitor preventing the GDP to GTP exchange of most Rab proteins. By keeping these small GTPases in their inactive GDP-bound form regulates intracellular membrane trafficking. Negatively regulates protein transport to the cilium and ciliogenesis through the inhibition of RAB8A. The sequence is that of Rab GDP dissociation inhibitor beta (GDI2) from Bos taurus (Bovine).